Reading from the N-terminus, the 226-residue chain is Regulator of microtubule dynamics protein 1 (226 aa).

Belongs to the FAM82/RMD family. In terms of assembly, interacts with air-2.

Its subcellular location is the cytoplasm. It localises to the cytoskeleton. It is found in the spindle pole. In terms of biological role, acts in chromosome segregation and organization during mitosis. This chain is Regulator of microtubule dynamics protein 1 (rmd-1), found in Caenorhabditis elegans.